We begin with the raw amino-acid sequence, 206 residues long: RNA-free ribonuclease P (206 aa).

The disordered stretch occupies residues 187–206 (NLAGDDPGHAPPCGPDQPAG). Residues 195 to 206 (HAPPCGPDQPAG) show a composition bias toward pro residues.

The protein belongs to the HARP family.

The enzyme catalyses Endonucleolytic cleavage of RNA, removing 5'-extranucleotides from tRNA precursor.. Functionally, RNA-free RNase P that catalyzes the removal of the 5'-leader sequence from pre-tRNA to produce the mature 5'-terminus. This is RNA-free ribonuclease P from Halorhodospira halophila (strain DSM 244 / SL1) (Ectothiorhodospira halophila (strain DSM 244 / SL1)).